The following is a 453-amino-acid chain: Tubulin alpha-1 chain (453 aa).

GTP is bound by residues Gln-11, Glu-71, Gly-144, Thr-145, Thr-179, Asn-206, and Asn-228. Glu-71 provides a ligand contact to Mg(2+). Glu-254 is an active-site residue. Residues 433–453 form a disordered region; it reads EEVGAETADGDGEEEEFGEEY.

The protein belongs to the tubulin family. In terms of assembly, dimer of alpha and beta chains. A typical microtubule is a hollow water-filled tube with an outer diameter of 25 nm and an inner diameter of 15 nM. Alpha-beta heterodimers associate head-to-tail to form protofilaments running lengthwise along the microtubule wall with the beta-tubulin subunit facing the microtubule plus end conferring a structural polarity. Microtubules usually have 13 protofilaments but different protofilament numbers can be found in some organisms and specialized cells. Mg(2+) is required as a cofactor. Post-translationally, undergoes a tyrosination/detyrosination cycle, the cyclic removal and re-addition of a C-terminal tyrosine residue by the enzymes tubulin tyrosine carboxypeptidase (TTCP) and tubulin tyrosine ligase (TTL), respectively.

The protein resides in the cytoplasm. Its subcellular location is the cytoskeleton. It catalyses the reaction GTP + H2O = GDP + phosphate + H(+). Its function is as follows. Tubulin is the major constituent of microtubules, a cylinder consisting of laterally associated linear protofilaments composed of alpha- and beta-tubulin heterodimers. Microtubules grow by the addition of GTP-tubulin dimers to the microtubule end, where a stabilizing cap forms. Below the cap, tubulin dimers are in GDP-bound state, owing to GTPase activity of alpha-tubulin. In Pelvetia fastigiata (Brown alga), this protein is Tubulin alpha-1 chain (TUBA1).